The chain runs to 337 residues: Glyceraldehyde-3-phosphate dehydrogenase (337 aa).

NAD(+) is bound by residues 11-12 (TI) and glycine 110. 139–141 (SCN) serves as a coordination point for D-glyceraldehyde 3-phosphate. Catalysis depends on cysteine 140, which acts as the Nucleophile. Arginine 168 lines the NAD(+) pocket. 194-195 (HG) serves as a coordination point for D-glyceraldehyde 3-phosphate. Residue glutamine 301 coordinates NAD(+).

The protein belongs to the glyceraldehyde-3-phosphate dehydrogenase family. As to quaternary structure, homotetramer.

The protein resides in the cytoplasm. The catalysed reaction is D-glyceraldehyde 3-phosphate + phosphate + NADP(+) = (2R)-3-phospho-glyceroyl phosphate + NADPH + H(+). It catalyses the reaction D-glyceraldehyde 3-phosphate + phosphate + NAD(+) = (2R)-3-phospho-glyceroyl phosphate + NADH + H(+). It participates in carbohydrate degradation; glycolysis; pyruvate from D-glyceraldehyde 3-phosphate: step 1/5. The sequence is that of Glyceraldehyde-3-phosphate dehydrogenase (gap) from Methanothermobacter thermautotrophicus (strain ATCC 29096 / DSM 1053 / JCM 10044 / NBRC 100330 / Delta H) (Methanobacterium thermoautotrophicum).